Reading from the N-terminus, the 190-residue chain is Isopentenyl-diphosphate Delta-isomerase (190 aa).

Residues His-27 and His-34 each contribute to the Mn(2+) site. The region spanning 32-166 (ALHLAFSCHV…PWAFSPWLTL (135 aa)) is the Nudix hydrolase domain. Residue Cys-69 is part of the active site. Position 71 (His-71) interacts with Mn(2+). Glu-89 provides a ligand contact to Mg(2+). Mn(2+) is bound by residues Glu-116 and Glu-118. Residue Glu-118 is part of the active site.

This sequence belongs to the IPP isomerase type 1 family. The cofactor is Mg(2+). Mn(2+) serves as cofactor.

It is found in the cytoplasm. It carries out the reaction isopentenyl diphosphate = dimethylallyl diphosphate. It functions in the pathway isoprenoid biosynthesis; dimethylallyl diphosphate biosynthesis; dimethylallyl diphosphate from isopentenyl diphosphate: step 1/1. In terms of biological role, catalyzes the 1,3-allylic rearrangement of the homoallylic substrate isopentenyl (IPP) to its highly electrophilic allylic isomer, dimethylallyl diphosphate (DMAPP). The sequence is that of Isopentenyl-diphosphate Delta-isomerase from Clavibacter sepedonicus (Clavibacter michiganensis subsp. sepedonicus).